Reading from the N-terminus, the 347-residue chain is GMP reductase (347 aa).

Position 108–131 (108–131 (NDFLKLQRILALSPALRFICVDVA)) interacts with NADP(+). 2 residues coordinate K(+): Gly-181 and Gly-183. Residue Cys-186 is the Thioimidate intermediate of the active site. 216–239 (IVGDGGCTCPGDVAKAFGGGADFV) contacts NADP(+).

It belongs to the IMPDH/GMPR family. GuaC type 1 subfamily. As to quaternary structure, homotetramer.

The catalysed reaction is IMP + NH4(+) + NADP(+) = GMP + NADPH + 2 H(+). Catalyzes the irreversible NADPH-dependent deamination of GMP to IMP. It functions in the conversion of nucleobase, nucleoside and nucleotide derivatives of G to A nucleotides, and in maintaining the intracellular balance of A and G nucleotides. The polypeptide is GMP reductase (Tolumonas auensis (strain DSM 9187 / NBRC 110442 / TA 4)).